The following is a 732-amino-acid chain: Catalase-peroxidase (732 aa).

Positions 97 to 220 form a cross-link, tryptophyl-tyrosyl-methioninium (Trp-Tyr) (with M-246); the sequence is WHSAGTYRTS…LAAVQMGLIY (124 aa). His-98 serves as the catalytic Proton acceptor. The segment at residues 220–246 is a cross-link (tryptophyl-tyrosyl-methioninium (Tyr-Met) (with W-97)); the sequence is YVNPEGPDGNPDPVAAGRDIRETFARM. His-261 serves as a coordination point for heme b.

It belongs to the peroxidase family. Peroxidase/catalase subfamily. As to quaternary structure, homodimer or homotetramer. The cofactor is heme b. Post-translationally, formation of the three residue Trp-Tyr-Met cross-link is important for the catalase, but not the peroxidase activity of the enzyme.

It carries out the reaction H2O2 + AH2 = A + 2 H2O. The enzyme catalyses 2 H2O2 = O2 + 2 H2O. Bifunctional enzyme with both catalase and broad-spectrum peroxidase activity. The polypeptide is Catalase-peroxidase (Pelodictyon phaeoclathratiforme (strain DSM 5477 / BU-1)).